Reading from the N-terminus, the 149-residue chain is Transcriptional repressor NrdR (149 aa).

The segment at 3 to 34 (CPFCFAVDTKVIDSRLVGEGSSVRRRRQCLVC) is a zinc-finger region. The ATP-cone domain occupies 49–139 (PRVIKSNDVR…VYRSFEDIKD (91 aa)).

It belongs to the NrdR family. Zn(2+) serves as cofactor.

In terms of biological role, negatively regulates transcription of bacterial ribonucleotide reductase nrd genes and operons by binding to NrdR-boxes. In Salmonella schwarzengrund (strain CVM19633), this protein is Transcriptional repressor NrdR.